The following is a 464-amino-acid chain: Centrosomal protein of 55 kDa (464 aa).

Residues 1 to 11 are compositionally biased toward basic and acidic residues; the sequence is MSSRSTKDLIK. The disordered stretch occupies residues 1–26; that stretch reads MSSRSTKDLIKSKWGSKPSNSKSETT. Coiled-coil stretches lie at residues 22 to 186, 238 to 337, and 374 to 403; these read KSET…QWLV, NDLL…FLYT, and QHQL…LHEF. Ser96 bears the Phosphoserine mark. Residues 157 to 236 are interaction with TSG101; sequence PNCFNSSINN…GYLQEEKQKC (80 aa). The segment at 160-214 is interaction with PDCD6IP; that stretch reads FNSSINNIHEMEIQLKDALEKNQQWLVYDQQREVYVKGLLAKIFELEKKTETAAH. Positions 355-464 are required for localization to the interphase centrosome and to the midbody during cytokinesis; that stretch reads QMQACTLDFE…LLVHVEYCSK (110 aa). 2 positions are modified to phosphoserine; by CDK1 and MAPK1: Ser425 and Ser428. At Thr430 the chain carries Phosphothreonine. Ser436 carries the phosphoserine; by PLK1 modification.

Homodimer. Interacts (phosphorylated on Ser-425 and Ser-428) with PLK1; the interaction is indirect via the MTMR3:MTMR4 heterooligomer, occurs during early mitosis, regulates the phosphorylation of CEP55 by PLK1 and its recruitment to the midbody where it can mediate cell abscission. Interacts with AKAP9/CG-NAP; the interaction occurs in interphase and is lost upon mitotic entry. Interacts with PCNT/Kendrin; the interaction occurs in interphase and is lost upon mitotic entry. Directly interacts with PDCD6IP; this interaction is required for PDCD6IP targeting to the midbody; CEP55 binds PDCD6IP in a 2:1 stoichiometry; PDCD6IP competes with TSG101 for the same binding site. Interacts with TSG101; TSG101 competes with PDCD6IP for the same binding site; interaction is required for cytokinesis but not for viral budding. Interacts with MVB12A, VPS37B, VPS37C and VPS28. Post-translationally, there is a hierachy of phosphorylation, where both Ser-425 and Ser-428 are phosphorylated at the onset of mitosis, prior to Ser-436. Phosphorylation at Ser-425 and Ser-428 is required for dissociation from the centrosome at the G2/M boundary. Phosphorylation at the 3 sites, Ser-425, Ser-428 and Ser-436, is required for protein function at the final stages of cell division to complete cytokinesis successfully. In terms of tissue distribution, expressed in embryonic brain. Expressed in fetal brain ganglionic eminence, kidney tubules and multinucleate neurons in the temporal cortex. Expressed in adult brain, cerebellum, kidney tubules, intestine and muscles (at protein level). Widely expressed, mostly in proliferative tissues. Highly expressed in testis. Intermediate levels in adult and fetal thymus, as well as in various cancer cell lines. Low levels in different parts of the digestive tract, bone marrow, lymph nodes, placenta, fetal heart and fetal spleen. Hardly detected in brain.

The protein localises to the cytoplasm. It is found in the cytoskeleton. It localises to the microtubule organizing center. The protein resides in the centrosome. Its subcellular location is the centriole. The protein localises to the cleavage furrow. It is found in the midbody. It localises to the midbody ring. Functionally, plays a role in mitotic exit and cytokinesis. Recruits PDCD6IP and TSG101 to midbody during cytokinesis. Required for successful completion of cytokinesis. Not required for microtubule nucleation. Plays a role in the development of the brain and kidney. This Homo sapiens (Human) protein is Centrosomal protein of 55 kDa.